The chain runs to 606 residues: Pescadillo homolog (606 aa).

The 102-residue stretch at 346-447 (LSTSLFSPYT…KILLEGPYGQ (102 aa)) folds into the BRCT domain. Residues 461-497 (YEGAYDPAAGPLGPSGVEQESESEADEVSEEDEEDQG) are disordered. The segment covering 479-496 (QESESEADEVSEEDEEDQ) has biased composition (acidic residues).

Belongs to the pescadillo family. As to quaternary structure, component of the NOP7 complex, composed of ERB1, NOP7 and YTM1. The complex is held together by ERB1, which interacts with NOP7 via its N-terminal domain and with YTM1 via a high-affinity interaction between the seven-bladed beta-propeller domains of the 2 proteins. The NOP7 complex associates with the 66S pre-ribosome.

It is found in the nucleus. The protein resides in the nucleolus. It localises to the nucleoplasm. Component of the NOP7 complex, which is required for maturation of the 25S and 5.8S ribosomal RNAs and formation of the 60S ribosome. The chain is Pescadillo homolog from Laccaria bicolor (strain S238N-H82 / ATCC MYA-4686) (Bicoloured deceiver).